The following is a 90-amino-acid chain: Small ribosomal subunit protein bS16 (90 aa).

This sequence belongs to the bacterial ribosomal protein bS16 family.

This chain is Small ribosomal subunit protein bS16, found in Moorella thermoacetica (strain ATCC 39073 / JCM 9320).